The chain runs to 203 residues: LexA repressor (203 aa).

Residues 30–50 (VREICQAVSLKSTSTVHGHLK) constitute a DNA-binding region (H-T-H motif). Catalysis depends on for autocatalytic cleavage activity residues S127 and K164.

It belongs to the peptidase S24 family. As to quaternary structure, homodimer.

It catalyses the reaction Hydrolysis of Ala-|-Gly bond in repressor LexA.. Its function is as follows. Represses a number of genes involved in the response to DNA damage (SOS response), including recA and lexA. In the presence of single-stranded DNA, RecA interacts with LexA causing an autocatalytic cleavage which disrupts the DNA-binding part of LexA, leading to derepression of the SOS regulon and eventually DNA repair. In Clostridium perfringens (strain SM101 / Type A), this protein is LexA repressor.